The sequence spans 500 residues: Maintenance of mitochondrial morphology protein 1 (500 aa).

Topologically, residues 1–42 are lumenal; the sequence is MATQVATPLSPSYTSELIIVCHHVLQHSPTPLTPHSLSFTQG. A helical membrane pass occupies residues 43 to 63; sequence FLLGQLSIALLIFFFIKFFIF. Residues 64–500 are Cytoplasmic-facing; sequence GEPPSADDRS…PGALAPGTFR (437 aa). In terms of domain architecture, SMP-LTD spans 141-375; the sequence is QPESLDWFNV…EPRFQQIVLP (235 aa). 2 stretches are compositionally biased toward low complexity: residues 283-294 and 302-316; these read SSSPPSTSTTTP and NSTT…HRPT. Disordered regions lie at residues 283–316 and 406–500; these read SSSP…HRPT and EEEE…GTFR. Residues 406–415 show a composition bias toward acidic residues; sequence EEEEEEEEDG. Over residues 438–471 the composition is skewed to basic and acidic residues; sequence EGAKLREAEIRAGVRKQERPGMSRAQTSREEGVR.

Belongs to the MMM1 family. Homodimer. Component of the ER-mitochondria encounter structure (ERMES) or MDM complex, composed of MMM1, MDM10, MDM12 and MDM34. An MMM1 homodimer associates with one molecule of MDM12 on each side in a pairwise head-to-tail manner, and the SMP-LTD domains of MMM1 and MDM12 generate a continuous hydrophobic tunnel for phospholipid trafficking.

It is found in the endoplasmic reticulum membrane. In terms of biological role, component of the ERMES/MDM complex, which serves as a molecular tether to connect the endoplasmic reticulum (ER) and mitochondria. Components of this complex are involved in the control of mitochondrial shape and protein biogenesis, and function in nonvesicular lipid trafficking between the ER and mitochondria. The MDM12-MMM1 subcomplex functions in the major beta-barrel assembly pathway that is responsible for biogenesis of all outer membrane beta-barrel proteins, and acts in a late step after the SAM complex. The MDM10-MDM12-MMM1 subcomplex further acts in the TOM40-specific pathway after the action of the MDM12-MMM1 complex. Essential for establishing and maintaining the structure of mitochondria and maintenance of mtDNA nucleoids. The polypeptide is Maintenance of mitochondrial morphology protein 1 (Phaeosphaeria nodorum (strain SN15 / ATCC MYA-4574 / FGSC 10173) (Glume blotch fungus)).